We begin with the raw amino-acid sequence, 239 residues long: Serine protease SplF (239 aa).

A signal peptide spans 1 to 36 (MNKNIIIKSIAALTILTSITGVGTTVVDGIQQTAKA). Residues histidine 75, aspartate 114, and serine 192 each act as charge relay system in the active site.

The protein belongs to the peptidase S1B family.

It is found in the secreted. The protein is Serine protease SplF (splF) of Staphylococcus aureus (strain MSSA476).